Reading from the N-terminus, the 163-residue chain is NADH-quinone oxidoreductase subunit I (163 aa).

4Fe-4S ferredoxin-type domains are found at residues 53–83 (LRRY…IEAG) and 94–123 (TRYD…EGPN). C63, C66, C69, C73, C103, C106, C109, and C113 together coordinate [4Fe-4S] cluster.

It belongs to the complex I 23 kDa subunit family. NDH-1 is composed of 14 different subunits. Subunits NuoA, H, J, K, L, M, N constitute the membrane sector of the complex. [4Fe-4S] cluster is required as a cofactor.

It is found in the cell inner membrane. It catalyses the reaction a quinone + NADH + 5 H(+)(in) = a quinol + NAD(+) + 4 H(+)(out). NDH-1 shuttles electrons from NADH, via FMN and iron-sulfur (Fe-S) centers, to quinones in the respiratory chain. The immediate electron acceptor for the enzyme in this species is believed to be ubiquinone. Couples the redox reaction to proton translocation (for every two electrons transferred, four hydrogen ions are translocated across the cytoplasmic membrane), and thus conserves the redox energy in a proton gradient. This is NADH-quinone oxidoreductase subunit I from Parvibaculum lavamentivorans (strain DS-1 / DSM 13023 / NCIMB 13966).